Consider the following 234-residue polypeptide: Adenosine 5'-phosphosulfate reductase (234 aa).

[4Fe-4S] cluster is bound by residues cysteine 120, cysteine 121, cysteine 203, and cysteine 206. Residue cysteine 229 is the Nucleophile; cysteine thiosulfonate intermediate of the active site.

It belongs to the PAPS reductase family. CysH subfamily. It depends on [4Fe-4S] cluster as a cofactor.

It localises to the cytoplasm. It catalyses the reaction [thioredoxin]-disulfide + sulfite + AMP + 2 H(+) = adenosine 5'-phosphosulfate + [thioredoxin]-dithiol. It functions in the pathway sulfur metabolism; hydrogen sulfide biosynthesis; sulfite from sulfate. Catalyzes the formation of sulfite from adenosine 5'-phosphosulfate (APS) using thioredoxin as an electron donor. The chain is Adenosine 5'-phosphosulfate reductase from Bacillus cereus (strain ZK / E33L).